We begin with the raw amino-acid sequence, 341 residues long: MTQQRPIAVLGGGSFGTAVANLLAENGHRVRQWMRDPEQAEAIRVNRENPRYLKGIKIHPAVEPVTDLLATLNDSDLCFVALPSSALRSVLAPHAELLRGKLLVSLTKGIEAQTFKLMSEILQDIAPQARIGVLSGPNLAREVAEHALTATVVASEDEELCQRVQAALHGRTFRVYASADRFGVELGGALKNVYAIIAGMAVALGMGENTKSMLITRALAEMTRFAVSQGANPMTFLGLAGVGDLIVTCSSPKSRNYQVGFALGQGLSLEEAVTRLGEVAEGVNTLKVLKVKAQELGVYMPLVAGLHAILFEGRTLNQVIELLMRGEPKTDVDFISTSGFN.

Residues Ser14, Phe15, Arg35, and Lys108 each coordinate NADPH. Residues Lys108 and Gly136 each contribute to the sn-glycerol 3-phosphate site. Ala140 is a binding site for NADPH. Sn-glycerol 3-phosphate-binding residues include Lys191, Asp244, Ser254, Arg255, and Asn256. Catalysis depends on Lys191, which acts as the Proton acceptor. Arg255 is a binding site for NADPH. The NADPH site is built by Val279 and Glu281.

It belongs to the NAD-dependent glycerol-3-phosphate dehydrogenase family.

It is found in the cytoplasm. It carries out the reaction sn-glycerol 3-phosphate + NAD(+) = dihydroxyacetone phosphate + NADH + H(+). It catalyses the reaction sn-glycerol 3-phosphate + NADP(+) = dihydroxyacetone phosphate + NADPH + H(+). Its pathway is membrane lipid metabolism; glycerophospholipid metabolism. In terms of biological role, catalyzes the reduction of the glycolytic intermediate dihydroxyacetone phosphate (DHAP) to sn-glycerol 3-phosphate (G3P), the key precursor for phospholipid synthesis. The polypeptide is Glycerol-3-phosphate dehydrogenase [NAD(P)+] (Pseudomonas fluorescens (strain ATCC BAA-477 / NRRL B-23932 / Pf-5)).